Here is a 105-residue protein sequence, read N- to C-terminus: Large ribosomal subunit protein uL24 (105 aa).

It belongs to the universal ribosomal protein uL24 family. In terms of assembly, part of the 50S ribosomal subunit.

In terms of biological role, one of two assembly initiator proteins, it binds directly to the 5'-end of the 23S rRNA, where it nucleates assembly of the 50S subunit. One of the proteins that surrounds the polypeptide exit tunnel on the outside of the subunit. This is Large ribosomal subunit protein uL24 from Parvibaculum lavamentivorans (strain DS-1 / DSM 13023 / NCIMB 13966).